Here is a 130-residue protein sequence, read N- to C-terminus: Small ribosomal subunit protein uS11c (130 aa).

The protein belongs to the universal ribosomal protein uS11 family. As to quaternary structure, part of the 30S ribosomal subunit.

The protein localises to the plastid. It is found in the chloroplast. This chain is Small ribosomal subunit protein uS11c, found in Marsilea quadrifolia (European water clover).